A 118-amino-acid polypeptide reads, in one-letter code: uncharacterized protein (118 aa).

The protein to E.coli YeaO.

This is an uncharacterized protein from Mycobacterium bovis (strain ATCC BAA-935 / AF2122/97).